A 250-amino-acid chain; its full sequence is Uridylate kinase (250 aa).

19–22 contributes to the ATP binding site; it reads KLSG. Residue glycine 61 coordinates UMP. The ATP site is built by glycine 62 and arginine 66. UMP-binding positions include aspartate 81 and 142-149; that span reads TGNPFFTT. The ATP site is built by threonine 169, glutamine 170, tyrosine 175, and aspartate 178.

This sequence belongs to the UMP kinase family. In terms of assembly, homohexamer.

The protein localises to the cytoplasm. The catalysed reaction is UMP + ATP = UDP + ADP. It participates in pyrimidine metabolism; CTP biosynthesis via de novo pathway; UDP from UMP (UMPK route): step 1/1. Its activity is regulated as follows. Inhibited by UTP. Functionally, catalyzes the reversible phosphorylation of UMP to UDP. This is Uridylate kinase from Rhodospirillum rubrum (strain ATCC 11170 / ATH 1.1.1 / DSM 467 / LMG 4362 / NCIMB 8255 / S1).